The sequence spans 319 residues: Triacylglycerol lipase (319 aa).

The region spanning P10–E288 is the AB hydrolase-1 domain. Residue L17 participates in substrate binding. The active-site Nucleophile is the S87. Q88 contributes to the substrate binding site. C190 and C269 are disulfide-bonded. D241 is a Ca(2+) binding site. Residues D263 and H285 each act as charge relay system in the active site. Ca(2+) is bound by residues D287, Q291, and V295.

It belongs to the AB hydrolase superfamily. Pseudomonas lipase family. In terms of assembly, monomer. Interacts with lipase-specific foldase Lif. The cofactor is Ca(2+).

It localises to the secreted. The catalysed reaction is a triacylglycerol + H2O = a diacylglycerol + a fatty acid + H(+). Functionally, catalyzes the hydrolysis of triacylglycerol. This chain is Triacylglycerol lipase, found in Pseudarthrobacter phenanthrenivorans (Arthrobacter phenanthrenivorans).